A 1220-amino-acid polypeptide reads, in one-letter code: Myosin-2 (1220 aa).

The span at 1–12 shows a compositional bias: polar residues; the sequence is MMLSASPNTLAK. Disordered stretches follow at residues 1-54 and 68-95; these read MMLS…ARRS and QNGS…RKEK. Residues 20–33 are compositionally biased toward basic and acidic residues; it reads ESLRQKDECDRPKD. A compositionally biased stretch (low complexity) spans 40-54; that stretch reads SRPNSRARLPSARRS. Residues 82–95 show a composition bias toward basic and acidic residues; that stretch reads ESERKEEGVKRKEK. Residues 160–209 form the Myosin N-terminal SH3-like domain; sequence KKKLRVWCRVSNGQWQLGKIQSTSADTSLVMLSTANVVKVSTEELFPANP. The Myosin motor domain maps to 213–879; the sequence is EGVEDLIQLS…QIGIFEDRRK (667 aa). ATP-binding positions include 304–311 and 353–361; these read GESGAGKT and NANSSRFGK. Actin-binding regions lie at residues 638 to 672 and 759 to 781; these read LIEK…KQHL and LFKL…KPNS. 3 consecutive IQ domains span residues 881 to 910, 904 to 933, and 942 to 971; these read VLQG…VTLV, MRKV…FHAD, and ELSA…QKEL. Disordered regions lie at residues 968 to 1007 and 1075 to 1118; these read QKEL…MSDL and SITG…NGNT. 2 stretches are compositionally biased toward polar residues: residues 997 to 1006 and 1098 to 1118; these read PQVQPTSMSD and TMST…NGNT. The stretch at 1003 to 1071 forms a coiled coil; it reads SMSDLQKRIL…MSLAAARKSL (69 aa).

This sequence belongs to the TRAFAC class myosin-kinesin ATPase superfamily. Myosin family. Plant myosin class VIII subfamily. Homodimer. As to expression, expressed in flowers, leaves and roots.

Its subcellular location is the cell junction. It is found in the plasmodesma. The protein resides in the endosome. Myosin heavy chain that is required for the cell cycle-regulated transport of various organelles and proteins for their segregation. Functions by binding with its tail domain to receptor proteins on organelles and exerting force with its N-terminal motor domain against actin filaments, thereby transporting its cargo along polarized actin cables. Involved in endocytosis via its action in endosomal trafficking. This Arabidopsis thaliana (Mouse-ear cress) protein is Myosin-2 (VIII-2).